A 181-amino-acid polypeptide reads, in one-letter code: MTVFEGNFTEDISSLRFAIVIGRFNDLVTDKLLSGCQDCLKRHGVDVNPDGTQVDYIWVPGSFEVPMVARQVALSHRYDAVICLGAIIRGQTPHFDYVAAEAAKGIAAAAFQTGVPVVFGILTTDTLQQALERAGIKSNLGWNYGLSALEMASLMRQLRPRNEDKPLELLENNPQQALMEG.

Residues Phe24, 62-64 (SFE), and 86-88 (AII) contribute to the 5-amino-6-(D-ribitylamino)uracil site. 91–92 (QT) is a (2S)-2-hydroxy-3-oxobutyl phosphate binding site. His94 functions as the Proton donor in the catalytic mechanism. Phe119 serves as a coordination point for 5-amino-6-(D-ribitylamino)uracil. Arg133 contributes to the (2S)-2-hydroxy-3-oxobutyl phosphate binding site.

This sequence belongs to the DMRL synthase family.

The enzyme catalyses (2S)-2-hydroxy-3-oxobutyl phosphate + 5-amino-6-(D-ribitylamino)uracil = 6,7-dimethyl-8-(1-D-ribityl)lumazine + phosphate + 2 H2O + H(+). Its pathway is cofactor biosynthesis; riboflavin biosynthesis; riboflavin from 2-hydroxy-3-oxobutyl phosphate and 5-amino-6-(D-ribitylamino)uracil: step 1/2. In terms of biological role, catalyzes the formation of 6,7-dimethyl-8-ribityllumazine by condensation of 5-amino-6-(D-ribitylamino)uracil with 3,4-dihydroxy-2-butanone 4-phosphate. This is the penultimate step in the biosynthesis of riboflavin. The polypeptide is 6,7-dimethyl-8-ribityllumazine synthase (Microcystis aeruginosa (strain NIES-843 / IAM M-2473)).